A 563-amino-acid polypeptide reads, in one-letter code: Bifunctional dihydrofolate reductase-thymidylate synthase (563 aa).

The DHFR domain maps to 3 to 195; sequence KFNIIAAINN…ILLRFQEYSV (193 aa). 117-124 lines the NADP(+) pocket; the sequence is GGGVIYDL. Residues 275 to 563 are thymidylate synthase; that stretch reads YIELVKTIME…CPSISAEMIA (289 aa). R292 provides a ligand contact to dUMP. C435 is an active-site residue. DUMP contacts are provided by residues H436, 464 to 468, N474, and 504 to 506; these read QRSWD and HIY.

The protein in the N-terminal section; belongs to the dihydrofolate reductase family. This sequence in the C-terminal section; belongs to the thymidylate synthase family.

The catalysed reaction is (6S)-5,6,7,8-tetrahydrofolate + NADP(+) = 7,8-dihydrofolate + NADPH + H(+). It carries out the reaction dUMP + (6R)-5,10-methylene-5,6,7,8-tetrahydrofolate = 7,8-dihydrofolate + dTMP. The protein operates within cofactor biosynthesis; tetrahydrofolate biosynthesis; 5,6,7,8-tetrahydrofolate from 7,8-dihydrofolate: step 1/1. In terms of biological role, bifunctional enzyme. Involved in de novo dTMP biosynthesis. Key enzyme in folate metabolism. Catalyzes an essential reaction for de novo glycine and purine synthesis, DNA precursor synthesis, and for the conversion of dUMP to dTMP. This is Bifunctional dihydrofolate reductase-thymidylate synthase from Acanthamoeba polyphaga mimivirus (APMV).